A 455-amino-acid chain; its full sequence is 3-phosphoshikimate 1-carboxyvinyltransferase (455 aa).

Residues 1–19 are compositionally biased toward polar residues; it reads MSHGASSRPATARKSSGLS. The segment at 1–25 is disordered; it reads MSHGASSRPATARKSSGLSGTVRIP. Lysine 28 lines the phosphoenolpyruvate pocket. Residues serine 29 and arginine 33 each coordinate 3-phosphoshikimate. A phosphoenolpyruvate-binding site is contributed by arginine 128. The 3-phosphoshikimate site is built by serine 173, alanine 174, glutamine 175, aspartate 326, and lysine 353. Glutamine 175 contacts phosphoenolpyruvate. The active-site Proton acceptor is aspartate 326. 2 residues coordinate phosphoenolpyruvate: arginine 357 and arginine 405.

Belongs to the EPSP synthase family. In terms of assembly, monomer.

The protein resides in the cytoplasm. The catalysed reaction is 3-phosphoshikimate + phosphoenolpyruvate = 5-O-(1-carboxyvinyl)-3-phosphoshikimate + phosphate. Its pathway is metabolic intermediate biosynthesis; chorismate biosynthesis; chorismate from D-erythrose 4-phosphate and phosphoenolpyruvate: step 6/7. Its activity is regulated as follows. Is resistant to inhibition by glyphosate (glyphosate-tolerant) like other members of class II EPSPS, in contrast to class I EPSPS, which is glyphosate-sensitive. Is much less sensitive to inhibition by the (R)-difluoromethyl and (R)-phosphonate analogs of the tetrahedral reaction intermediate than the representative class I EPSPS from E.coli. Is highly activated in the presence of cations, such as NH4(+), Rb(+), and K(+). In terms of biological role, catalyzes the transfer of the enolpyruvyl moiety of phosphoenolpyruvate (PEP) to the 5-hydroxyl of shikimate-3-phosphate (S3P) to produce enolpyruvyl shikimate-3-phosphate and inorganic phosphate. The sequence is that of 3-phosphoshikimate 1-carboxyvinyltransferase from Agrobacterium sp. (strain CP4).